The sequence spans 479 residues: Glucagon receptor (479 aa).

Positions 1-25 (MPPARLRHPHLLLLLLLACQPQAPA) are cleaved as a signal peptide. Residues 26 to 136 (AQAMDFLFQK…ELGVQREVAE (111 aa)) are Extracellular-facing. 3 disulfide bridges follow: C43-C67, C58-C100, and C81-C121. N-linked (GlcNAc...) asparagine glycosylation is found at N46, N59, N74, N78, and N117. Residues 137–161 (MYSSFQAMYTAGYSLSLAALLLALA) form a helical membrane-spanning segment. Residues 162–173 (ILLGLSKLHCTR) lie on the Cytoplasmic side of the membrane. Residues 174–198 (NYIHANLLASFVLRASSVLALDALL) form a helical membrane-spanning segment. The Extracellular portion of the chain corresponds to 199-225 (KTRYSQRLGDDLSVSIWLSDEAVAGCR). A disulfide bridge connects residues C224 and C294. The helical transmembrane segment at 226 to 249 (VAAVFMQYGVVANYCWLLVEGVYL) threads the bilayer. Residues 250–263 (HSLLRQATIPERSC) are Cytoplasmic-facing. A helical membrane pass occupies residues 264 to 285 (FPLYLAIGWGAPMLFVIPWAVV). Residues 286 to 303 (KCLFENIQCWTSNDNMGF) lie on the Extracellular side of the membrane. Residues 304 to 326 (WWILRFPVFLAILINFSIFIRVL) form a helical membrane-spanning segment. Topologically, residues 327–350 (HVLVAKLRAHQMRCTDYKFRLARS) are cytoplasmic. The chain crosses the membrane as a helical span at residues 351-369 (TLTLIPLLGVHEVVFAFVT). At 370 to 381 (DEHAQGALRSAK) the chain is on the extracellular side. Residues 382–402 (LFFDLFLSSFQGLLVAVLYCF) traverse the membrane as a helical segment. Topologically, residues 403–479 (LNKEVQAELL…GLPGVAENPF (77 aa)) are cytoplasmic. The segment at 426–479 (KAHRVGSHSARPPSGPPSEKLLLSTGGSSNGTSQEPSAETHLASGLPGVAENPF) is disordered. A compositionally biased stretch (low complexity) spans 446–458 (LLLSTGGSSNGTS). Position 458 is a phosphoserine (S458).

Belongs to the G-protein coupled receptor 2 family. Post-translationally, ligand-binding promotes phosphorylation of serine residues in the C-terminal cytoplasmic domain. Phosphorylation is important for receptor endocytosis after ligand-binding.

It is found in the cell membrane. G-protein coupled receptor for glucagon that plays a central role in the regulation of blood glucose levels and glucose homeostasis. Regulates the rate of hepatic glucose production by promoting glycogen hydrolysis and gluconeogenesis. Plays an important role in mediating the responses to fasting. Ligand binding causes a conformation change that triggers signaling via guanine nucleotide-binding proteins (G proteins) and modulates the activity of down-stream effectors, such as adenylate cyclase. Promotes activation of adenylate cyclase. Besides, plays a role in signaling via a phosphatidylinositol-calcium second messenger system. This is Glucagon receptor from Sus scrofa (Pig).